We begin with the raw amino-acid sequence, 307 residues long: Probable protein S-acyltransferase 14 (307 aa).

2 helical membrane-spanning segments follow: residues 22–42 (LGSIMILLVLGVVGVTYYAVV) and 63–83 (ILILFHFLLAMLLWSYFSVVF). Residues 127-177 (RFCRKCNQLKPSRCHHCSVCGRCVLKMDHHCVWVVNCVGALNYKYFLLFLF) enclose the DHHC domain. The active-site S-palmitoyl cysteine intermediate is the C157. Transmembrane regions (helical) follow at residues 171-191 (YFLLFLFYTFLETTLVTLVLM) and 213-233 (TFLAFVLNLAFALSVMGFLIM).

This sequence belongs to the DHHC palmitoyltransferase family.

It localises to the golgi apparatus. Its subcellular location is the trans-Golgi network membrane. It catalyses the reaction L-cysteinyl-[protein] + hexadecanoyl-CoA = S-hexadecanoyl-L-cysteinyl-[protein] + CoA. In terms of biological role, palmitoyl acyltransferase. This is Probable protein S-acyltransferase 14 (PAT14) from Arabidopsis thaliana (Mouse-ear cress).